The sequence spans 378 residues: tRNA-specific 2-thiouridylase MnmA (378 aa).

ATP-binding positions include 9-16 (GVSGGVDS) and Met35. The interval 94–96 (NPD) is interaction with target base in tRNA. Cys99 serves as the catalytic Nucleophile. Cys99 and Cys195 form a disulfide bridge. Residue Gly123 coordinates ATP. An interaction with tRNA region spans residues 145-147 (KDQ). The active-site Cysteine persulfide intermediate is Cys195. The tract at residues 307–308 (RY) is interaction with tRNA.

Belongs to the MnmA/TRMU family.

The protein resides in the cytoplasm. It carries out the reaction S-sulfanyl-L-cysteinyl-[protein] + uridine(34) in tRNA + AH2 + ATP = 2-thiouridine(34) in tRNA + L-cysteinyl-[protein] + A + AMP + diphosphate + H(+). Functionally, catalyzes the 2-thiolation of uridine at the wobble position (U34) of tRNA, leading to the formation of s(2)U34. This is tRNA-specific 2-thiouridylase MnmA from Xanthomonas euvesicatoria pv. vesicatoria (strain 85-10) (Xanthomonas campestris pv. vesicatoria).